A 216-amino-acid chain; its full sequence is Octanoyltransferase (216 aa).

In terms of domain architecture, BPL/LPL catalytic spans 35–213 (NSNPDFIWIG…IIQEEFNFDF (179 aa)). Residues 77–84 (RGGEVTCH), 144–146 (SIG), and 157–159 (GFS) contribute to the substrate site. Residue C175 is the Acyl-thioester intermediate of the active site.

The protein belongs to the LipB family.

Its subcellular location is the cytoplasm. The enzyme catalyses octanoyl-[ACP] + L-lysyl-[protein] = N(6)-octanoyl-L-lysyl-[protein] + holo-[ACP] + H(+). It participates in protein modification; protein lipoylation via endogenous pathway; protein N(6)-(lipoyl)lysine from octanoyl-[acyl-carrier-protein]: step 1/2. Its function is as follows. Catalyzes the transfer of endogenously produced octanoic acid from octanoyl-acyl-carrier-protein onto the lipoyl domains of lipoate-dependent enzymes. Lipoyl-ACP can also act as a substrate although octanoyl-ACP is likely to be the physiological substrate. This is Octanoyltransferase from Prochlorococcus marinus (strain MIT 9215).